The primary structure comprises 127 residues: Holo-[acyl-carrier-protein] synthase (127 aa).

Residues D8 and E56 each contribute to the Mg(2+) site.

It belongs to the P-Pant transferase superfamily. AcpS family. Requires Mg(2+) as cofactor.

The protein localises to the cytoplasm. It catalyses the reaction apo-[ACP] + CoA = holo-[ACP] + adenosine 3',5'-bisphosphate + H(+). Transfers the 4'-phosphopantetheine moiety from coenzyme A to a Ser of acyl-carrier-protein. The protein is Holo-[acyl-carrier-protein] synthase of Cytophaga hutchinsonii (strain ATCC 33406 / DSM 1761 / CIP 103989 / NBRC 15051 / NCIMB 9469 / D465).